The sequence spans 478 residues: Monocarboxylate transporter 2 (478 aa).

Residues 1 to 15 (MPPMPSAPPVHPPPD) are Cytoplasmic-facing. The helical transmembrane segment at 16–36 (GGWGWIVVGAAFISIGFSYAF) threads the bilayer. Residues 37 to 59 (PKAVTVFFKEIQQIFHTTYSEIA) are Extracellular-facing. Residues 60 to 80 (WISSIMLAVMYAGGPVSSVLV) form a helical membrane-spanning segment. The Cytoplasmic portion of the chain corresponds to 81 to 89 (NKYGSRPVV). A helical membrane pass occupies residues 90 to 110 (IAGGLLCCLGMVLASFSSSVV). Topologically, residues 111–115 (QLYLT) are extracellular. The helical transmembrane segment at 116-136 (MGFITGLGLAFNLQPALTIIG) threads the bilayer. Residues 137-148 (KYFYRKRPMANG) lie on the Cytoplasmic side of the membrane. Residues 149–169 (LAMAGSPVFLSSLAPFNQYLF) traverse the membrane as a helical segment. At 170–173 (NTFG) the chain is on the extracellular side. The helical transmembrane segment at 174–194 (WKGSFLILGSLLLNACVAGSL) threads the bilayer. The Cytoplasmic segment spans residues 195–246 (MRPLGPNQTTSKSKNKTGKTEDDSSPKKIKTKKSTWEKVNKYLDFSLFKHRG). The interval 200 to 224 (PNQTTSKSKNKTGKTEDDSSPKKIK) is disordered. Residues 247 to 267 (FLIYLSGNVIMFLGFFAPIIF) traverse the membrane as a helical segment. Topologically, residues 268–282 (LAPYAKDQGIDEYSA) are extracellular. A helical transmembrane segment spans residues 283 to 303 (AFLLSVMAFVDMFARPSVGLI). The Cytoplasmic segment spans residues 304–312 (ANSKYIRPR). The chain crosses the membrane as a helical span at residues 313–333 (IQYFFSFAIMFNGVCHLLCPL). The Extracellular portion of the chain corresponds to 334 to 338 (AQDYT). The chain crosses the membrane as a helical span at residues 339–359 (SLVLYAVFFGLGFGSVSSVLF). Topologically, residues 360–373 (ETLMDLVGAPRFSS) are cytoplasmic. Residues 374 to 394 (AVGLVTIVECGPVLLGPPLAG) traverse the membrane as a helical segment. The Extracellular segment spans residues 395 to 406 (KLVDLTGEYKYM). A helical transmembrane segment spans residues 407–427 (YMSCGAIVVAASVWLLIGNAI). The Cytoplasmic portion of the chain corresponds to 428–478 (NYRLLAKERKEENARQKTRESEPLSKSKHSEDVNVKVSNAQSVTSERETNI). The span at 437–461 (KEENARQKTRESEPLSKSKHSEDVN) shows a compositional bias: basic and acidic residues. Positions 437 to 478 (KEENARQKTRESEPLSKSKHSEDVNVKVSNAQSVTSERETNI) are disordered.

The protein belongs to the major facilitator superfamily. Monocarboxylate porter (TC 2.A.1.13) family. In terms of assembly, homodimer. Interacts with GRID2IP. Interacts with EMB; interaction mediates SLC16A7 targeting to the plasma membrane. Interacts with isoform 2 of BSG. As to expression, detected in heart and in blood lymphocytes and monocytes (at protein level). High expression in testis, moderate to low in spleen, heart, kidney, pancreas, skeletal muscle, brain and leukocyte. Restricted expression in normal tissues, but widely expressed in cancer cells.

The protein resides in the cell membrane. It localises to the basolateral cell membrane. Its subcellular location is the cytoplasm. It carries out the reaction pyruvate(out) + H(+)(out) = pyruvate(in) + H(+)(in). It catalyses the reaction 3-methyl-2-oxobutanoate(out) + H(+)(out) = 3-methyl-2-oxobutanoate(in) + H(+)(in). The catalysed reaction is (S)-lactate(in) + H(+)(in) = (S)-lactate(out) + H(+)(out). The enzyme catalyses acetoacetate(out) + H(+)(out) = acetoacetate(in) + H(+)(in). It carries out the reaction (R)-3-hydroxybutanoate(out) + H(+)(out) = (R)-3-hydroxybutanoate(in) + H(+)(in). It catalyses the reaction 4-methyl-2-oxopentanoate(out) + H(+)(out) = 4-methyl-2-oxopentanoate(in) + H(+)(in). The catalysed reaction is (S)-3-hydroxybutanoate(out) + H(+)(out) = (S)-3-hydroxybutanoate(in) + H(+)(in). Transport activity exhibits steep dependence on substrate concentration. Substrate concentration sensitivity of SLC16A7 arises from the strong inter-subunit cooperativity of the SLC16A7 dimer during transport. Inhibited by AR-C155858. Its function is as follows. Proton-coupled monocarboxylate symporter. Catalyzes the rapid transport across the plasma membrane of monocarboxylates such as L-lactate, pyruvate and ketone bodies, acetoacetate, beta-hydroxybutyrate and acetate. Dimerization is functionally required and both subunits work cooperatively in transporting substrate. This chain is Monocarboxylate transporter 2, found in Homo sapiens (Human).